The following is a 392-amino-acid chain: 4-hydroxybenzoate polyprenyltransferase, mitochondrial (392 aa).

Residues 1-22 constitute a mitochondrion transit peptide; sequence MYALRHLRLQSARHFRSSYAAA. 9 helical membrane passes run 90–110, 115–135, 163–183, 184–204, 207–227, 236–256, 283–303, 307–327, and 339–359; these read IGTY…ADAG, LTML…GCTI, FDAI…LVQL, NWQS…YPLM, VTYW…LLGW, LAAC…YDTI, VWLS…GWAC, VPYY…IYSL, and FISN…GTLL. Residues 365-392 form a disordered region; sequence KKQRQSSLTTSTASSYVPALPQKPEVLS. The segment covering 369–379 has biased composition (polar residues); that stretch reads QSSLTTSTASS.

It belongs to the UbiA prenyltransferase family. It depends on Mg(2+) as a cofactor.

The protein resides in the mitochondrion inner membrane. It catalyses the reaction an all-trans-polyprenyl diphosphate + 4-hydroxybenzoate = a 4-hydroxy-3-(all-trans-polyprenyl)benzoate + diphosphate. It functions in the pathway cofactor biosynthesis; ubiquinone biosynthesis. Catalyzes the prenylation of para-hydroxybenzoate (PHB) with an all-trans polyprenyl group. Mediates the second step in the final reaction sequence of coenzyme Q (CoQ) biosynthesis, which is the condensation of the polyisoprenoid side chain with PHB, generating the first membrane-bound Q intermediate. The sequence is that of 4-hydroxybenzoate polyprenyltransferase, mitochondrial from Drosophila melanogaster (Fruit fly).